The sequence spans 297 residues: Phosphoribosylaminoimidazole-succinocarboxamide synthase (297 aa).

This sequence belongs to the SAICAR synthetase family.

The catalysed reaction is 5-amino-1-(5-phospho-D-ribosyl)imidazole-4-carboxylate + L-aspartate + ATP = (2S)-2-[5-amino-1-(5-phospho-beta-D-ribosyl)imidazole-4-carboxamido]succinate + ADP + phosphate + 2 H(+). It participates in purine metabolism; IMP biosynthesis via de novo pathway; 5-amino-1-(5-phospho-D-ribosyl)imidazole-4-carboxamide from 5-amino-1-(5-phospho-D-ribosyl)imidazole-4-carboxylate: step 1/2. The sequence is that of Phosphoribosylaminoimidazole-succinocarboxamide synthase from Mycobacterium marinum (strain ATCC BAA-535 / M).